A 554-amino-acid chain; its full sequence is Malate synthase 1 (554 aa).

R177 acts as the Proton acceptor in catalysis. Catalysis depends on D457, which acts as the Proton donor. The short motif at 552-554 (SKL) is the SKL peroxisome targeting motif element.

This sequence belongs to the malate synthase family. As to quaternary structure, interacts with PEX9.

The protein localises to the peroxisome matrix. The enzyme catalyses glyoxylate + acetyl-CoA + H2O = (S)-malate + CoA + H(+). It participates in carbohydrate metabolism; glyoxylate cycle; (S)-malate from isocitrate: step 2/2. Its function is as follows. Malate synthase which takes part in the glyoxylate cycle. MLS1 activity is essential for cells to grow on oleic acid as a sole carbon source. Two steps of the glyoxylate cycle take place in the cytosol, the splitting of isocitrate into succinate and glyoxylate, and the dehydrogenation of malate to oxaloacetate. However, the formation of malate from glyoxylate and acetyl-CoA undertaken MLS1, occurs in the peroxisomes when cells are grown on oleic acid. The source of acetyl-CoA being either peroxisomal when breaking down fatty acids, or cytosolic when extra-cellular two-carbon substrates are used, therefore, although not strictly essential, the peroxisomal localization of MLS1 appears to be advantageous for cells growing on oleic acid, in that acetyl-CoA production and utilization are thereby intimately compartmentalized together to increase efficiency. In Saccharomyces cerevisiae (strain ATCC 204508 / S288c) (Baker's yeast), this protein is Malate synthase 1.